We begin with the raw amino-acid sequence, 118 residues long: Large ribosomal subunit protein bL20 (118 aa).

It belongs to the bacterial ribosomal protein bL20 family.

Functionally, binds directly to 23S ribosomal RNA and is necessary for the in vitro assembly process of the 50S ribosomal subunit. It is not involved in the protein synthesizing functions of that subunit. The polypeptide is Large ribosomal subunit protein bL20 (Lacticaseibacillus casei (strain BL23) (Lactobacillus casei)).